The following is a 154-amino-acid chain: Avirulence protein ATR13 (154 aa).

A signal peptide spans 1–19 (MRLVHAVLLPGIIVFVSNG). A RxLR motif is present at residues 38 to 41 (RQLR). A leucine heptad repeat region region spans residues 50-92 (LSRASFGLGKAQDPLDKFFSKIIFSGKPIETSYSAKGIHEKII). The interval 93–103 (EAHDLHVSKSK) is single repeat region. The highly variable C-terminus domain stretch occupies residues 104-154 (NAPIQYASVMEYLKKTYPGPDIERIVSTLERHDEVGAKDLGAKLRDALDRQ).

The protein belongs to the RxLR effector family.

The protein localises to the secreted. The protein resides in the host cytoplasm. In terms of biological role, secreted effector that acts as an elicitor of hypersensitive response (HR) specifically on plants carrying defense protein RPP13. Recognition of ATR13 by RPP13 initiates defense responses that are effective against oomycete, bacterial and viral pathogens. The allele ATR13-Emco5 recognizes RPP13-Nd, the RPP13 defense protein from Arabidopsis thaliana ecotype Niederzenz. The polypeptide is Avirulence protein ATR13 (Hyaloperonospora arabidopsidis (Peronospora arabidopsidis)).